A 214-amino-acid polypeptide reads, in one-letter code: Heat shock 70 kDa protein cognate 1 (214 aa).

The protein belongs to the heat shock protein 70 family.

This chain is Heat shock 70 kDa protein cognate 1 (Hsc70-1), found in Drosophila simulans (Fruit fly).